Consider the following 376-residue polypeptide: Glutamate 5-kinase (376 aa).

Lys-17 is an ATP binding site. Residues Ser-57, Asp-144, and Asn-156 each coordinate substrate. 176 to 177 (TD) serves as a coordination point for ATP. The region spanning 283–361 (KGQLVLDEGA…SEINQLLGYS (79 aa)) is the PUA domain.

The protein belongs to the glutamate 5-kinase family.

The protein resides in the cytoplasm. The catalysed reaction is L-glutamate + ATP = L-glutamyl 5-phosphate + ADP. Its pathway is amino-acid biosynthesis; L-proline biosynthesis; L-glutamate 5-semialdehyde from L-glutamate: step 1/2. Functionally, catalyzes the transfer of a phosphate group to glutamate to form L-glutamate 5-phosphate. This Hydrogenovibrio crunogenus (strain DSM 25203 / XCL-2) (Thiomicrospira crunogena) protein is Glutamate 5-kinase.